The primary structure comprises 1029 residues: FYVE, RhoGEF and PH domain-containing protein tag-77 (1029 aa).

Composition is skewed to basic and acidic residues over residues 1–12 (MKYDMNHRKNSD) and 20–39 (TVKE…DNRF). Disordered regions lie at residues 1 to 155 (MKYD…ATSE), 185 to 254 (VPRM…ERKT), and 279 to 370 (NNGV…EKDD). Over residues 42–56 (QPPPPPSPRRAPPPP) the composition is skewed to pro residues. 2 stretches are compositionally biased toward low complexity: residues 76–85 (PPSSSESSEN) and 122–133 (SSSTSDVSSQNS). Composition is skewed to polar residues over residues 141 to 155 (SCTT…ATSE) and 200 to 211 (PISQVSTLSQVS). A compositionally biased stretch (acidic residues) spans 212-227 (DEFDEGDTSASDEESM). The span at 316 to 334 (SPTSGMSSSSTDDFSRITS) shows a compositional bias: low complexity. Positions 335–347 (MTSDRSSILTSHS) are enriched in polar residues. The 198-residue stretch at 375–572 (KLHYAAVEFL…ENVTQAVNQK (198 aa)) folds into the DH domain. Positions 593–696 (NVLEPGRVLI…WTDDLTKAQY (104 aa)) constitute a PH domain. Zn(2+) contacts are provided by Cys-810, Cys-823, Cys-826, Cys-831, Cys-834, Cys-851, and Cys-854. An FYVE-type; degenerate zinc finger spans residues 810–859 (CSTEFNIINRRHHCRDCGWLICKFCKGQAPLSKYDFTKQNVCSECFDRHY).

The protein localises to the cytoplasm. It is found in the cytoskeleton. In terms of biological role, activates cdc-42, a member of the Ras-like family of Rho- and Rac proteins, by exchanging bound GDP for free GTP. May play a role in regulating the actin cytoskeleton and cell shape. Required for normal lifespan. The sequence is that of FYVE, RhoGEF and PH domain-containing protein tag-77 from Caenorhabditis elegans.